We begin with the raw amino-acid sequence, 523 residues long: UPF0329 protein ECU02_0050 (523 aa).

The disordered stretch occupies residues 326–386; the sequence is EEKAKSKKRG…KTGKKSEGGR (61 aa). A compositionally biased stretch (basic residues) spans 330–339; sequence KSKKRGKRKS. Residues 344 to 353 show a composition bias toward basic and acidic residues; sequence EAKEEEKKES. Positions 354–368 are enriched in acidic residues; the sequence is ETEEVEAGEEVEMPS.

Belongs to the UPF0329 family.

In Encephalitozoon cuniculi (strain GB-M1) (Microsporidian parasite), this protein is UPF0329 protein ECU02_0050.